The primary structure comprises 290 residues: Nucleoid occlusion protein (290 aa).

The segment at residues 153–172 is a DNA-binding region (H-T-H motif); it reads EALAQRLGKGQSTIANKLRL.

Belongs to the ParB family.

It localises to the cytoplasm. Its subcellular location is the nucleoid. Its function is as follows. Effects nucleoid occlusion by binding relatively nonspecifically to DNA and preventing the assembly of the division machinery in the vicinity of the nucleoid, especially under conditions that disturb the cell cycle. It helps to coordinate cell division and chromosome segregation by preventing the formation of the Z ring through the nucleoid, which would cause chromosome breakage. This is Nucleoid occlusion protein from Bacillus cereus (strain G9842).